The primary structure comprises 67 residues: MRLKHNGRKSPIMNCSKRTDRKSILSPLIFRQQMILIQNLNQKLKTIKACLYQTWKLSRLKALYRSL.

It belongs to the rhabdoviruses C protein family.

Seems to stimulates transcription by the viral polymerase. May play a role in viral pathogenesis or transmission by insects vectors. In Vesicular stomatitis Indiana virus (strain 94GUB Central America) (VSIV), this protein is Protein C' (P).